Consider the following 70-residue polypeptide: Small ribosomal subunit protein bS21 (70 aa).

The protein belongs to the bacterial ribosomal protein bS21 family.

The sequence is that of Small ribosomal subunit protein bS21 from Chromobacterium violaceum (strain ATCC 12472 / DSM 30191 / JCM 1249 / CCUG 213 / NBRC 12614 / NCIMB 9131 / NCTC 9757 / MK).